The following is a 115-amino-acid chain: Large ribosomal subunit protein uL24 (115 aa).

Belongs to the universal ribosomal protein uL24 family. Part of the 50S ribosomal subunit.

Its function is as follows. One of two assembly initiator proteins, it binds directly to the 5'-end of the 23S rRNA, where it nucleates assembly of the 50S subunit. In terms of biological role, one of the proteins that surrounds the polypeptide exit tunnel on the outside of the subunit. This is Large ribosomal subunit protein uL24 from Aster yellows witches'-broom phytoplasma (strain AYWB).